The following is a 315-amino-acid chain: tRNA pseudouridine synthase B (315 aa).

Aspartate 54 acts as the Nucleophile in catalysis.

It belongs to the pseudouridine synthase TruB family. Type 1 subfamily.

It carries out the reaction uridine(55) in tRNA = pseudouridine(55) in tRNA. Responsible for synthesis of pseudouridine from uracil-55 in the psi GC loop of transfer RNAs. The chain is tRNA pseudouridine synthase B from Cupriavidus taiwanensis (strain DSM 17343 / BCRC 17206 / CCUG 44338 / CIP 107171 / LMG 19424 / R1) (Ralstonia taiwanensis (strain LMG 19424)).